The chain runs to 92 residues: Turripeptide UID-02 (92 aa).

The signal sequence occupies residues 1 to 21; it reads MGFYMLLTVALLLTSLMNVEA. Residues 22–39 constitute a propeptide that is removed on maturation; the sequence is TPVDQAERSALEKSGLGN.

Expressed by the venom duct.

It is found in the secreted. The polypeptide is Turripeptide UID-02 (Gemmula speciosa (Splendid gem-turris)).